A 283-amino-acid chain; its full sequence is Cyclin-C (283 aa).

One can recognise a Cyclin N-terminal domain in the interval 46–144 (NVIQALGEHL…VLECEFYLLE (99 aa)). A disordered region spans residues 252 to 283 (TILSKMPKPKPPPNSEGEQGPNGSQNSSYSQS). Positions 272-283 (PNGSQNSSYSQS) are enriched in polar residues. A Phosphoserine modification is found at Ser275.

Belongs to the cyclin family. Cyclin C subfamily. In terms of assembly, component of the Mediator complex, which is composed of MED1, MED4, MED6, MED7, MED8, MED9, MED10, MED11, MED12, MED13, MED13L, MED14, MED15, MED16, MED17, MED18, MED19, MED20, MED21, MED22, MED23, MED24, MED25, MED26, MED27, MED29, MED30, MED31, CCNC, CDK8 and CDC2L6/CDK11. The MED12, MED13, CCNC and CDK8 subunits form a distinct module termed the CDK8 module. Mediator containing the CDK8 module is less active than Mediator lacking this module in supporting transcriptional activation. Individual preparations of the Mediator complex lacking one or more distinct subunits have been variously termed ARC, CRSP, DRIP, PC2, SMCC and TRAP. The cylin/CDK pair formed by CCNC/CDK8 also associates with the large subunit of RNA polymerase II.

The protein resides in the nucleus. Functionally, component of the Mediator complex, a coactivator involved in regulated gene transcription of nearly all RNA polymerase II-dependent genes. Mediator functions as a bridge to convey information from gene-specific regulatory proteins to the basal RNA polymerase II transcription machinery. Mediator is recruited to promoters by direct interactions with regulatory proteins and serves as a scaffold for the assembly of a functional preinitiation complex with RNA polymerase II and the general transcription factors. Binds to and activates cyclin-dependent kinase CDK8 that phosphorylates the CTD (C-terminal domain) of the large subunit of RNA polymerase II (RNAp II), which may inhibit the formation of a transcription initiation complex. The polypeptide is Cyclin-C (CCNC) (Bos taurus (Bovine)).